Reading from the N-terminus, the 563-residue chain is Arginine--tRNA ligase (563 aa).

A 'HIGH' region motif is present at residues 121–131; sequence PNIAKPFSIGH.

The protein belongs to the class-I aminoacyl-tRNA synthetase family. In terms of assembly, monomer.

It localises to the cytoplasm. It catalyses the reaction tRNA(Arg) + L-arginine + ATP = L-arginyl-tRNA(Arg) + AMP + diphosphate. This is Arginine--tRNA ligase from Streptococcus pneumoniae (strain CGSP14).